A 201-amino-acid chain; its full sequence is Receptor expression-enhancing protein 6 (201 aa).

3 consecutive transmembrane segments (helical) span residues 36–56, 89–109, and 117–137; these read LAAG…GASL, WVVY…LFWF, and CAFL…LLYH.

This sequence belongs to the DP1 family. In terms of assembly, interacts with STX3. Interacts with clathrin. As to expression, expressed in the inner segment of rod photoreceptors and outer plexiform layer of the retina (at protein level). Expressed in liver, but not detected in brain, muscle, kidney, retinal cone photoreceptors or retinal ganglion cells (at protein level). Highly expressed in the ganglion cell layer of the retina and in liver, and also detected at low levels in kidney and testis. Isoform 1: Expressed in the retina. Isoform 2: Expressed in liver.

It localises to the endoplasmic reticulum membrane. It is found in the cytoplasmic vesicle. The protein resides in the clathrin-coated vesicle membrane. Its function is as follows. Required for correct function and survival of retinal photoreceptors. Required for retinal development. In rod photoreceptors, facilitates stability and/or trafficking of guanylate cyclases and is required to maintain endoplasmic reticulum and mitochondrial homeostasis. May play a role in clathrin-coated intracellular vesicle trafficking of proteins from the endoplasmic reticulum to the retinal rod plasma membrane. This Mus musculus (Mouse) protein is Receptor expression-enhancing protein 6 (Reep6).